A 115-amino-acid chain; its full sequence is Large ribosomal subunit protein uL22 (115 aa).

The protein belongs to the universal ribosomal protein uL22 family. Part of the 50S ribosomal subunit.

This protein binds specifically to 23S rRNA; its binding is stimulated by other ribosomal proteins, e.g. L4, L17, and L20. It is important during the early stages of 50S assembly. It makes multiple contacts with different domains of the 23S rRNA in the assembled 50S subunit and ribosome. In terms of biological role, the globular domain of the protein is located near the polypeptide exit tunnel on the outside of the subunit, while an extended beta-hairpin is found that lines the wall of the exit tunnel in the center of the 70S ribosome. The protein is Large ribosomal subunit protein uL22 of Streptomyces griseus subsp. griseus (strain JCM 4626 / CBS 651.72 / NBRC 13350 / KCC S-0626 / ISP 5235).